The primary structure comprises 921 residues: GPI ethanolamine phosphate transferase 1 (921 aa).

Over 1-9 (MKNNTRFTL) the chain is Cytoplasmic. A helical transmembrane segment spans residues 10 to 30 (IVVGVLFHLLYLWSIFDIYFI). The Lumenal portion of the chain corresponds to 31-457 (SPLVHGMEQK…TTYNWRFIRT (427 aa)). N90, N138, N198, N262, and N286 each carry an N-linked (GlcNAc...) asparagine glycan. A helical membrane pass occupies residues 458-478 (IVTFGFLGWICYSFMIFLKLF). Topologically, residues 479–488 (ILNNSQTTHP) are cytoplasmic. Residues 489-509 (SILNISIFTSLGLILNYILFY) form a helical membrane-spanning segment. At 510–516 (QKSPLNF) the chain is on the lumenal side. Residues 517-537 (YLYLIFPLFFWSKIFSNTAII) form a helical membrane-spanning segment. Topologically, residues 538–552 (RDGVNEFFKGISKAE) are cytoplasmic. Residues 553–573 (SVIIGLTIISIYEGIVYGFFH) traverse the membrane as a helical segment. Over 574–575 (RW) the chain is Lumenal. A helical transmembrane segment spans residues 576–596 (ILSLILVSFAFYPLVCGVTDL). At 597–599 (FTN) the chain is on the cytoplasmic side. A helical membrane pass occupies residues 600-620 (LLWILTSVGLSSFTLLDAVKI). E621 is a topological domain (lumenal). The chain crosses the membrane as a helical span at residues 622 to 642 (NLQQIQVAGILIVLSSAYAVM). Topologically, residues 643–654 (RLSQDISKYTQH) are cytoplasmic. A helical membrane pass occupies residues 655 to 675 (LLSIQIFLVSGMLHFTSKSVI). Residues 676–684 (SLQKREGLP) lie on the Lumenal side of the membrane. The chain crosses the membrane as a helical span at residues 685-705 (AFAQVGGWAILVISLTIMPFL). The Cytoplasmic segment spans residues 706–728 (HYLKPNNNYQVRLLTIYLTFAPS). The helical transmembrane segment at 729-749 (FIILSISFEALFYFIFTAYIV) threads the bilayer. The Lumenal portion of the chain corresponds to 750 to 777 (QWLQIEKNIKVLKDEQKSDSNGIQLLRV). Residues 778-798 (AIIGFFLQQIAFFGTGNVASI) traverse the membrane as a helical segment. Over 799-819 (SSFSLDSVYRLLPVFDPFPMG) the chain is Cytoplasmic. A helical transmembrane segment spans residues 820 to 840 (ALLMLKLIIPYVLLSCGLGIM). Residues 841 to 849 (NIQLDIKDY) are Lumenal-facing. A helical transmembrane segment spans residues 850–870 (TISSLIISTSDILSLNFFYLL). Topologically, residues 871 to 878 (KTEGSWLD) are cytoplasmic. A helical membrane pass occupies residues 879-899 (IGVTISNYCLAILSSLFMLIL). Topologically, residues 900–921 (EIVGHQLLKNVTRATSSQKKTN) are lumenal. A glycan (N-linked (GlcNAc...) asparagine) is linked at N909.

The protein belongs to the PIGG/PIGN/PIGO family. PIGN subfamily.

The protein localises to the endoplasmic reticulum membrane. It participates in glycolipid biosynthesis; glycosylphosphatidylinositol-anchor biosynthesis. Functionally, ethanolamine phosphate transferase involved in glycosylphosphatidylinositol-anchor biosynthesis. Transfers ethanolamine phosphate to the first alpha-1,4-linked mannose of the glycosylphosphatidylinositol precursor of GPI-anchor. This chain is GPI ethanolamine phosphate transferase 1 (MCD4), found in Candida glabrata (strain ATCC 2001 / BCRC 20586 / JCM 3761 / NBRC 0622 / NRRL Y-65 / CBS 138) (Yeast).